A 116-amino-acid chain; its full sequence is Protein Wnt-5b (116 aa).

The O-palmitoleoyl serine; by PORCN moiety is linked to residue Ser-1. Residues Asn-69 and Asn-83 are each glycosylated (N-linked (GlcNAc...) asparagine). A disulfide bond links Cys-82 and Cys-97.

This sequence belongs to the Wnt family. Post-translationally, palmitoleoylation is required for efficient binding to frizzled receptors. Depalmitoleoylation leads to Wnt signaling pathway inhibition.

The protein localises to the secreted. It localises to the extracellular space. Its subcellular location is the extracellular matrix. Functionally, ligand for members of the frizzled family of seven transmembrane receptors. Probable developmental protein. May be a signaling molecule which affects the development of discrete regions of tissues. Is likely to signal over only few cell diameters. This Plethodon jordani (Red-cheeked salamander) protein is Protein Wnt-5b (WNT-5B).